The chain runs to 429 residues: Malate dehydrogenase [NADP] 1, chloroplastic (429 aa).

Residues 1 to 40 (MGLSTAYSPVGSHLAPAPLGHRRSAQLHRPRRALLATVRC) constitute a chloroplast transit peptide. Cys-64 and Cys-69 are oxidised to a cystine. An NADP(+)-binding site is contributed by 93 to 99 (GAAGMIS). Residues Arg-174 and Arg-180 each contribute to the substrate site. Residues Asn-187, Gln-194, and 211 to 213 (VGN) each bind NADP(+). Residues Asn-213 and Arg-244 each contribute to the substrate site. His-269 functions as the Proton acceptor in the catalytic mechanism. The cysteines at positions 405 and 417 are disulfide-linked.

The protein belongs to the LDH/MDH superfamily. MDH type 2 family. In terms of assembly, homodimer.

The protein localises to the plastid. It is found in the chloroplast. It catalyses the reaction (S)-malate + NADP(+) = oxaloacetate + NADPH + H(+). Chloroplast NADP-MDH is activated upon illumination. In order to be enzymatically active, disulfide bridges on the protein must be reduced by thioredoxin which receives electrons from ferredoxin and the electron transport system of photosynthesis. Functionally, the chloroplastic, NADP-dependent form is essential for the photosynthesis C4 cycle, which allows plants to circumvent the problem of photorespiration. In C4 plants, NADP-MDH activity acts to convert oxaloacetate to malate in chloroplasts of mesophyll cells for transport to the bundle sheath cells. The sequence is that of Malate dehydrogenase [NADP] 1, chloroplastic from Sorghum bicolor (Sorghum).